The sequence spans 245 residues: tRNA1(Val) (adenine(37)-N6)-methyltransferase (245 aa).

Belongs to the methyltransferase superfamily. tRNA (adenine-N(6)-)-methyltransferase family.

Its subcellular location is the cytoplasm. The enzyme catalyses adenosine(37) in tRNA1(Val) + S-adenosyl-L-methionine = N(6)-methyladenosine(37) in tRNA1(Val) + S-adenosyl-L-homocysteine + H(+). Specifically methylates the adenine in position 37 of tRNA(1)(Val) (anticodon cmo5UAC). In Escherichia coli (strain UTI89 / UPEC), this protein is tRNA1(Val) (adenine(37)-N6)-methyltransferase.